The sequence spans 234 residues: ATP synthase subunit a 2 (234 aa).

5 helical membrane passes run 20-40 (ATLI…WFVT), 78-98 (YLPF…LSVI), 107-127 (SLST…LYGV), 169-189 (VMSG…FFPV), and 194-214 (LGLL…MVFI).

This sequence belongs to the ATPase A chain family. In terms of assembly, F-type ATPases have 2 components, CF(1) - the catalytic core - and CF(0) - the membrane proton channel. CF(1) has five subunits: alpha(3), beta(3), gamma(1), delta(1), epsilon(1). CF(0) has four main subunits: a, b, b' and c.

It is found in the cellular thylakoid membrane. Key component of the proton channel; it plays a direct role in the translocation of protons across the membrane. The chain is ATP synthase subunit a 2 from Acaryochloris marina (strain MBIC 11017).